Here is a 485-residue protein sequence, read N- to C-terminus: Inosine-5'-monophosphate dehydrogenase (485 aa).

CBS domains are found at residues 97–154 and 155–211; these read IIRD…VSDV and MVRD…PDAS. NAD(+) contacts are provided by residues aspartate 246 and 295–297; that span reads GIG. Positions 297 and 299 each coordinate K(+). Residue serine 300 coordinates IMP. Cysteine 302 serves as a coordination point for K(+). The active-site Thioimidate intermediate is the cysteine 302. IMP-binding positions include 335–337, 358–359, and 382–386; these read DGG, GS, and YRGMG. Catalysis depends on arginine 398, which acts as the Proton acceptor. Residue glutamate 409 participates in IMP binding. Residues glutamate 463, serine 464, and histidine 465 each contribute to the K(+) site.

The protein belongs to the IMPDH/GMPR family. As to quaternary structure, homotetramer. Requires K(+) as cofactor.

The enzyme catalyses IMP + NAD(+) + H2O = XMP + NADH + H(+). It functions in the pathway purine metabolism; XMP biosynthesis via de novo pathway; XMP from IMP: step 1/1. Mycophenolic acid (MPA) is a non-competitive inhibitor that prevents formation of the closed enzyme conformation by binding to the same site as the amobile flap. In contrast, mizoribine monophosphate (MZP) is a competitive inhibitor that induces the closed conformation. MPA is a potent inhibitor of mammalian IMPDHs but a poor inhibitor of the bacterial enzymes. MZP is a more potent inhibitor of bacterial IMPDH. Its function is as follows. Catalyzes the conversion of inosine 5'-phosphate (IMP) to xanthosine 5'-phosphate (XMP), the first committed and rate-limiting step in the de novo synthesis of guanine nucleotides, and therefore plays an important role in the regulation of cell growth. The sequence is that of Inosine-5'-monophosphate dehydrogenase from Thermoplasma acidophilum (strain ATCC 25905 / DSM 1728 / JCM 9062 / NBRC 15155 / AMRC-C165).